Reading from the N-terminus, the 88-residue chain is MVKLRLKRCGKKQRAVYRIVAIDVRSRREGRDLWKVGFYDPINNKTYLDIPGILYFLEKGAQPTGTVYDILKKAGVFTEFSLNQMEVN.

The protein belongs to the bacterial ribosomal protein bS16 family.

The protein resides in the plastid. Its subcellular location is the chloroplast. In Oenothera elata subsp. hookeri (Hooker's evening primrose), this protein is Small ribosomal subunit protein bS16c.